We begin with the raw amino-acid sequence, 444 residues long: Shufflon protein B' (444 aa).

The tract at residues 1–361 is constant region; sequence MKKYDRGWAS…TGAILSCQSG (361 aa). Residues 362–444 are variable region; the sequence is TWRKVGSGEL…GSITVYAICQ (83 aa).

The chain is Shufflon protein B' from Escherichia coli.